The sequence spans 641 residues: Phosphomethylpyrimidine synthase (641 aa).

Residues asparagine 221, methionine 250, tyrosine 279, histidine 315, 335–337 (SRG), 376–379 (DGLR), and glutamate 415 contribute to the substrate site. Histidine 419 contacts Zn(2+). Residue tyrosine 442 participates in substrate binding. Position 483 (histidine 483) interacts with Zn(2+). The [4Fe-4S] cluster site is built by cysteine 563, cysteine 566, and cysteine 571.

It belongs to the ThiC family. As to quaternary structure, homodimer. [4Fe-4S] cluster serves as cofactor.

The catalysed reaction is 5-amino-1-(5-phospho-beta-D-ribosyl)imidazole + S-adenosyl-L-methionine = 4-amino-2-methyl-5-(phosphooxymethyl)pyrimidine + CO + 5'-deoxyadenosine + formate + L-methionine + 3 H(+). It participates in cofactor biosynthesis; thiamine diphosphate biosynthesis. In terms of biological role, catalyzes the synthesis of the hydroxymethylpyrimidine phosphate (HMP-P) moiety of thiamine from aminoimidazole ribotide (AIR) in a radical S-adenosyl-L-methionine (SAM)-dependent reaction. In Rhodopseudomonas palustris (strain BisA53), this protein is Phosphomethylpyrimidine synthase.